The chain runs to 82 residues: Small ribosomal subunit protein uS17 (82 aa).

Belongs to the universal ribosomal protein uS17 family. As to quaternary structure, part of the 30S ribosomal subunit.

In terms of biological role, one of the primary rRNA binding proteins, it binds specifically to the 5'-end of 16S ribosomal RNA. The sequence is that of Small ribosomal subunit protein uS17 from Shewanella sp. (strain MR-7).